A 500-amino-acid polypeptide reads, in one-letter code: NAD(P)H-quinone oxidoreductase chain 4, chloroplastic (500 aa).

14 consecutive transmembrane segments (helical) span residues 4–24, 37–57, 87–107, 113–130, 134–154, 167–187, 207–227, 242–262, 272–292, 305–325, 330–350, 386–406, 411–431, and 462–482; these read FPWLTIIVVLPISAGSLIFFL, ICICVLELLLTTYAFCYHFQL, IGPILLTGFITTLATLAAWPV, LFHFLMLAMYSGQIGSFS, LLLFFLMWELELIPVYLLLSM, FILYTAGGSIFLLIGVLGIGL, IALEIIFYIGFLIAFAVKSPI, HYSTCMLLAGILLKMGAYGLV, AHSLFSPWLVVVGTMQIIYAA, IAYSSVSHMGFIIIGIGSITD, GAILQIVSHGFIGAALFFLAG, LALPGMSGFVAELIVFFGIIT, FLMAKILITFVMAIGMILTPI, and LFVSISILLPVIGIGIYPDFL.

The protein belongs to the complex I subunit 4 family.

The protein resides in the plastid. The protein localises to the chloroplast thylakoid membrane. The catalysed reaction is a plastoquinone + NADH + (n+1) H(+)(in) = a plastoquinol + NAD(+) + n H(+)(out). It catalyses the reaction a plastoquinone + NADPH + (n+1) H(+)(in) = a plastoquinol + NADP(+) + n H(+)(out). In Carica papaya (Papaya), this protein is NAD(P)H-quinone oxidoreductase chain 4, chloroplastic.